A 595-amino-acid polypeptide reads, in one-letter code: Flap endonuclease 1 (595 aa).

Positions 1-106 are N-domain; the sequence is MGIKGLTKFI…SELEKRGEKR (106 aa). Residue D34 participates in Mg(2+) binding. Residues R47 and R72 each contribute to the DNA site. The Mg(2+) site is built by D88, E160, E162, D181, and D183. The I-domain stretch occupies residues 124–267; the sequence is EIKKQSGRTV…KTAYNLIKEY (144 aa). E160 is a DNA binding site. Positions 245 and 247 each coordinate DNA. D247 lines the Mg(2+) pocket. The tract at residues 350–358 is interaction with PCNA; it reads TQRRLDNFF. The disordered stretch occupies residues 370 to 493; the sequence is NEESQIKKEV…TGDVYSFPNG (124 aa). Polar residues predominate over residues 392–401; that stretch reads NDSSTKLNSK. Over residues 406 to 425 the composition is skewed to basic and acidic residues; sequence PKGEKESKTEKDDGDTHNGN. The span at 426–436 shows a compositional bias: acidic residues; that stretch reads DNEEEGGEGET. Positions 461-475 are enriched in basic and acidic residues; the sequence is HKSDSESGNVKKEST.

Belongs to the XPG/RAD2 endonuclease family. FEN1 subfamily. In terms of assembly, interacts with PCNA. Three molecules of FEN1 bind to one PCNA trimer with each molecule binding to one PCNA monomer. PCNA stimulates the nuclease activity without altering cleavage specificity. Mg(2+) serves as cofactor. Phosphorylated. Phosphorylation upon DNA damage induces relocalization to the nuclear plasma.

The protein localises to the nucleus. Its subcellular location is the nucleolus. It localises to the nucleoplasm. The protein resides in the mitochondrion. Its function is as follows. Structure-specific nuclease with 5'-flap endonuclease and 5'-3' exonuclease activities involved in DNA replication and repair. During DNA replication, cleaves the 5'-overhanging flap structure that is generated by displacement synthesis when DNA polymerase encounters the 5'-end of a downstream Okazaki fragment. It enters the flap from the 5'-end and then tracks to cleave the flap base, leaving a nick for ligation. Also involved in the long patch base excision repair (LP-BER) pathway, by cleaving within the apurinic/apyrimidinic (AP) site-terminated flap. Acts as a genome stabilization factor that prevents flaps from equilibrating into structures that lead to duplications and deletions. Also possesses 5'-3' exonuclease activity on nicked or gapped double-stranded DNA, and exhibits RNase H activity. Also involved in replication and repair of rDNA and in repairing mitochondrial DNA. The chain is Flap endonuclease 1 from Plasmodium knowlesi (strain H).